A 196-amino-acid chain; its full sequence is Large ribosomal subunit protein eL15 (196 aa).

The interval 153-196 (DPSSRGRATRGKTSAGRKGRGMATRGKGTEKTRPSIRAYKSRGK) is disordered. A compositionally biased stretch (basic residues) spans 159–172 (RATRGKTSAGRKGR).

This sequence belongs to the eukaryotic ribosomal protein eL15 family.

The sequence is that of Large ribosomal subunit protein eL15 from Methanosarcina acetivorans (strain ATCC 35395 / DSM 2834 / JCM 12185 / C2A).